We begin with the raw amino-acid sequence, 38 residues long: Non-specific lipid-transfer protein P2 (38 aa).

It belongs to the plant LTP family.

The protein localises to the secreted. Plant non-specific lipid-transfer proteins transfer phospholipids as well as galactolipids across membranes. May play a role in wax or cutin deposition in the cell walls of expanding epidermal cells and certain secretory tissues. The protein is Non-specific lipid-transfer protein P2 of Vitis sp. (Grape).